Here is a 299-residue protein sequence, read N- to C-terminus: Oxygen-dependent coproporphyrinogen-III oxidase (299 aa).

A substrate-binding site is contributed by Ser-92. Positions 96 and 106 each coordinate a divalent metal cation. His-106 serves as the catalytic Proton donor. Residue 108–110 coordinates substrate; it reads NVR. 2 residues coordinate a divalent metal cation: His-145 and His-175. An important for dimerization region spans residues 240–275; that stretch reads YVEFNLVWDRGTLFGLQTGGRTESILMSMPPLVRWE. Substrate is bound at residue 258–260; it reads GGR.

This sequence belongs to the aerobic coproporphyrinogen-III oxidase family. In terms of assembly, homodimer. A divalent metal cation is required as a cofactor.

Its subcellular location is the cytoplasm. It carries out the reaction coproporphyrinogen III + O2 + 2 H(+) = protoporphyrinogen IX + 2 CO2 + 2 H2O. It functions in the pathway porphyrin-containing compound metabolism; protoporphyrin-IX biosynthesis; protoporphyrinogen-IX from coproporphyrinogen-III (O2 route): step 1/1. In terms of biological role, involved in the heme biosynthesis. Catalyzes the aerobic oxidative decarboxylation of propionate groups of rings A and B of coproporphyrinogen-III to yield the vinyl groups in protoporphyrinogen-IX. In Citrobacter koseri (strain ATCC BAA-895 / CDC 4225-83 / SGSC4696), this protein is Oxygen-dependent coproporphyrinogen-III oxidase.